Here is a 178-residue protein sequence, read N- to C-terminus: Bifunctional protein PyrR (178 aa).

A PRPP-binding motif is present at residues 99–111 (VILVDDVLFTGRT).

It belongs to the purine/pyrimidine phosphoribosyltransferase family. PyrR subfamily. As to quaternary structure, homodimer and homohexamer; in equilibrium.

It catalyses the reaction UMP + diphosphate = 5-phospho-alpha-D-ribose 1-diphosphate + uracil. In terms of biological role, regulates transcriptional attenuation of the pyrimidine nucleotide (pyr) operon by binding in a uridine-dependent manner to specific sites on pyr mRNA. This disrupts an antiterminator hairpin in the RNA and favors formation of a downstream transcription terminator, leading to a reduced expression of downstream genes. Functionally, also displays a weak uracil phosphoribosyltransferase activity which is not physiologically significant. The chain is Bifunctional protein PyrR from Limosilactobacillus reuteri subsp. reuteri (strain JCM 1112) (Lactobacillus reuteri).